We begin with the raw amino-acid sequence, 494 residues long: Metalloprotease TIKI1 (494 aa).

Positions methionine 1 to alanine 25 are cleaved as a signal peptide. The Extracellular segment spans residues asparagine 26–arginine 467. 2 N-linked (GlcNAc...) asparagine glycosylation sites follow: asparagine 234 and asparagine 282. A helical membrane pass occupies residues threonine 468–glutamine 488. The Cytoplasmic portion of the chain corresponds to methionine 489–leucine 494.

It belongs to the TIKI family. Mn(2+) serves as cofactor. Requires Co(2+) as cofactor.

Its subcellular location is the cell membrane. Metalloprotease that acts as a negative regulator of the Wnt signaling pathway by mediating the cleavage of the N-terminal residues of a subset of Wnt proteins. Following cleavage, Wnt proteins become oxidized and form large disulfide-bond oligomers, leading to their inactivation. In Danio rerio (Zebrafish), this protein is Metalloprotease TIKI1 (trabd2a).